Consider the following 347-residue polypeptide: S-adenosylmethionine:tRNA ribosyltransferase-isomerase (347 aa).

The protein belongs to the QueA family. Monomer.

It localises to the cytoplasm. The catalysed reaction is 7-aminomethyl-7-carbaguanosine(34) in tRNA + S-adenosyl-L-methionine = epoxyqueuosine(34) in tRNA + adenine + L-methionine + 2 H(+). The protein operates within tRNA modification; tRNA-queuosine biosynthesis. Functionally, transfers and isomerizes the ribose moiety from AdoMet to the 7-aminomethyl group of 7-deazaguanine (preQ1-tRNA) to give epoxyqueuosine (oQ-tRNA). This chain is S-adenosylmethionine:tRNA ribosyltransferase-isomerase, found in Pseudomonas aeruginosa (strain LESB58).